The following is a 378-amino-acid chain: Protein FAM170B (378 aa).

3 disordered regions span residues 1–56, 244–265, and 277–378; these read MKHH…LPDD, TRDQ…DSSE, and QQQP…QQGK. Composition is skewed to low complexity over residues 277–339 and 349–378; these read QQQP…QPLQ and PQKQ…QQGK.

It belongs to the FAM170 family. Interacts with GOPC. Exclusively expressed in adult testis (at protein level). Expression first started at postnatal week 3 in round spermatids, elongated spermatids and mature sperm.

It localises to the cytoplasmic vesicle. Its subcellular location is the secretory vesicle. The protein resides in the acrosome. The protein localises to the acrosome outer membrane. Plays a role in fertilization through the acrosome reaction. The protein is Protein FAM170B of Mus musculus (Mouse).